The sequence spans 737 residues: Glycogen [starch] synthase, muscle (737 aa).

Ser-8 carries the phosphoserine; by AMPK and PKA modification. Ser-11 is subject to Phosphoserine. Lys-39 is a UDP binding site. UDP-alpha-D-glucose contacts are provided by His-205 and Arg-211. Alpha-D-glucose 6-phosphate contacts are provided by His-291, Glu-292, Gln-294, His-297, and Lys-301. Arg-331 serves as a coordination point for UDP. Arg-331 provides a ligand contact to UDP-alpha-D-glucose. The residue at position 412 (Ser-412) is a Phosphoserine. Residue His-501 coordinates alpha-D-glucose 6-phosphate. UDP-alpha-D-glucose-binding residues include Glu-510, Trp-512, and Gly-513. UDP is bound at residue Thr-515. Residues Arg-582 and Arg-586 each coordinate alpha-D-glucose 6-phosphate. The disordered stretch occupies residues 634 to 737 (YRYPRPASVP…PTSSLGEERN (104 aa)). Ser-641 is subject to Phosphoserine; by DYRK2, GSK3-alpha, GSK3-beta and PASK. Ser-645 and Ser-649 each carry phosphoserine; by GSK3-alpha and GSK3-beta. Ser-652 carries the phosphoserine modification. Ser-653 carries the phosphoserine; by GSK3-alpha and GSK3-beta modification. Residue Ser-657 is modified to Phosphoserine; by CK2. Residues 658-681 (EDEEDPRNGPLEEDGERYDEDEEA) are compositionally biased toward acidic residues. The segment covering 682–695 (AKDRRNIRAPEWPR) has biased composition (basic and acidic residues). Ser-698 carries the post-translational modification Phosphoserine. Polar residues predominate over residues 698-714 (SCTSSTSGSKRNSVDTA). A Phosphothreonine modification is found at Thr-700. The residue at position 710 (Ser-710) is a Phosphoserine. A compositionally biased stretch (low complexity) spans 715-737 (TSSSLSTPSEPLSPTSSLGEERN). Thr-721 carries the post-translational modification Phosphothreonine. 2 positions are modified to phosphoserine: Ser-727 and Ser-731.

Belongs to the glycosyltransferase 3 family. Part of the GYS1-GYG1 complex, a heterooctamer composed of a tetramer of GYS1 and 2 dimers of GYG1, where each GYS1 protomer binds to one GYG1 subunit (via GYG1 C-terminus); the GYS1 tetramer may dissociate from GYG1 dimers to continue glycogen polymerization on its own. Post-translationally, phosphorylation at Ser-8 by AMPK inactivates the enzyme activity. Primed phosphorylation at Ser-657 (site 5) by CSNK2A1 and CSNK2A2 is required for inhibitory phosphorylation at Ser-641 (site 3a), Ser-645 (site 3b), Ser-649 (site 3c) and Ser-653 (site 4) by GSK3A an GSK3B. Phosphorylated at Ser-641 by PASK, leading to inactivation; phosphorylation by PASK is inhibited by glycogen. Phosphorylated at Ser-641 by DYRK2, leading to inactivation. Dephosphorylation at Ser-641 and Ser-645 by PP1 activates the enzyme.

It catalyses the reaction [(1-&gt;4)-alpha-D-glucosyl](n) + UDP-alpha-D-glucose = [(1-&gt;4)-alpha-D-glucosyl](n+1) + UDP + H(+). It participates in glycan biosynthesis; glycogen biosynthesis. Allosteric activation by glucose-6-phosphate. Phosphorylation reduces the activity towards UDP-glucose. When in the non-phosphorylated state, glycogen synthase does not require glucose-6-phosphate as an allosteric activator; when phosphorylated it does. Its function is as follows. Glycogen synthase participates in the glycogen biosynthetic process along with glycogenin and glycogen branching enzyme. Extends the primer composed of a few glucose units formed by glycogenin by adding new glucose units to it. In this context, glycogen synthase transfers the glycosyl residue from UDP-Glc to the non-reducing end of alpha-1,4-glucan. The protein is Glycogen [starch] synthase, muscle (GYS1) of Pongo abelii (Sumatran orangutan).